The following is a 431-amino-acid chain: Glutamate--tRNA ligase 1 (431 aa).

The 'HIGH' region signature appears at 11 to 21; that stretch reads PSPTGDLHLGG. The short motif at 203–207 is the 'KMSKS' region element; it reads KLSKR. An ATP-binding site is contributed by Lys-206.

The protein belongs to the class-I aminoacyl-tRNA synthetase family. Glutamate--tRNA ligase type 1 subfamily. Monomer.

Its subcellular location is the cytoplasm. The catalysed reaction is tRNA(Glu) + L-glutamate + ATP = L-glutamyl-tRNA(Glu) + AMP + diphosphate. In terms of biological role, catalyzes the attachment of glutamate to tRNA(Glu) in a two-step reaction: glutamate is first activated by ATP to form Glu-AMP and then transferred to the acceptor end of tRNA(Glu). In Rubrobacter xylanophilus (strain DSM 9941 / JCM 11954 / NBRC 16129 / PRD-1), this protein is Glutamate--tRNA ligase 1.